Consider the following 326-residue polypeptide: tRNA dimethylallyltransferase 2 (326 aa).

Glycine 14–threonine 21 is an ATP binding site. Position 16-21 (threonine 16–threonine 21) interacts with substrate. The tract at residues aspartate 39 to glutamine 42 is interaction with substrate tRNA.

Belongs to the IPP transferase family. As to quaternary structure, monomer. Mg(2+) is required as a cofactor.

The catalysed reaction is adenosine(37) in tRNA + dimethylallyl diphosphate = N(6)-dimethylallyladenosine(37) in tRNA + diphosphate. Functionally, catalyzes the transfer of a dimethylallyl group onto the adenine at position 37 in tRNAs that read codons beginning with uridine, leading to the formation of N6-(dimethylallyl)adenosine (i(6)A). The sequence is that of tRNA dimethylallyltransferase 2 from Geotalea daltonii (strain DSM 22248 / JCM 15807 / FRC-32) (Geobacter daltonii).